Consider the following 151-residue polypeptide: 3-dehydroquinate dehydratase (151 aa).

Residue Tyr24 is the Proton acceptor of the active site. Residues Asn76, His82, and Asp89 each coordinate substrate. The Proton donor role is filled by His102. Substrate contacts are provided by residues 103–104 (VS) and Arg113.

Belongs to the type-II 3-dehydroquinase family. In terms of assembly, homododecamer.

The enzyme catalyses 3-dehydroquinate = 3-dehydroshikimate + H2O. The protein operates within metabolic intermediate biosynthesis; chorismate biosynthesis; chorismate from D-erythrose 4-phosphate and phosphoenolpyruvate: step 3/7. Its function is as follows. Catalyzes a trans-dehydration via an enolate intermediate. The sequence is that of 3-dehydroquinate dehydratase from Afipia carboxidovorans (strain ATCC 49405 / DSM 1227 / KCTC 32145 / OM5) (Oligotropha carboxidovorans).